Consider the following 161-residue polypeptide: Cytochrome c-type biogenesis protein CcmE (161 aa).

The Cytoplasmic portion of the chain corresponds to 1–8 (MNPRRKKR). The helical; Signal-anchor for type II membrane protein transmembrane segment at 9–29 (LTLAVALIAGVAAVASLLLYA) threads the bilayer. The Periplasmic portion of the chain corresponds to 30–161 (LNSNLNLFYT…TYNQKALEDK (132 aa)). 2 residues coordinate heme: His-131 and Tyr-135. The tract at residues 142–161 (EAMGQTHEKPTYNQKALEDK) is disordered. Basic and acidic residues predominate over residues 147–161 (THEKPTYNQKALEDK).

Belongs to the CcmE/CycJ family.

It is found in the cell inner membrane. Its function is as follows. Heme chaperone required for the biogenesis of c-type cytochromes. Transiently binds heme delivered by CcmC and transfers the heme to apo-cytochromes in a process facilitated by CcmF and CcmH. This Shewanella frigidimarina (strain NCIMB 400) protein is Cytochrome c-type biogenesis protein CcmE.